The chain runs to 444 residues: Methylenetetrahydrofolate--tRNA-(uracil-5-)-methyltransferase TrmFO (444 aa).

Residue 10-15 (GAGLAG) participates in FAD binding.

The protein belongs to the MnmG family. TrmFO subfamily. Requires FAD as cofactor.

It localises to the cytoplasm. The enzyme catalyses uridine(54) in tRNA + (6R)-5,10-methylene-5,6,7,8-tetrahydrofolate + NADH + H(+) = 5-methyluridine(54) in tRNA + (6S)-5,6,7,8-tetrahydrofolate + NAD(+). The catalysed reaction is uridine(54) in tRNA + (6R)-5,10-methylene-5,6,7,8-tetrahydrofolate + NADPH + H(+) = 5-methyluridine(54) in tRNA + (6S)-5,6,7,8-tetrahydrofolate + NADP(+). Its function is as follows. Catalyzes the folate-dependent formation of 5-methyl-uridine at position 54 (M-5-U54) in all tRNAs. The protein is Methylenetetrahydrofolate--tRNA-(uracil-5-)-methyltransferase TrmFO of Streptococcus equi subsp. equi (strain 4047).